The primary structure comprises 608 residues: Actin-interacting protein 1 (608 aa).

WD repeat units follow at residues 62–101 (EHSCAVNVAKYSPSGFYIASGDASGKIRIWDTVNKEHLLK), 106–149 (PIAG…GEIS), 150–190 (GQSK…FKMT), 193–232 (DHSRFVQAVRYSPDGKFFASAGFDGKVFLYDGTSSELVGE), 237–276 (AHKGGVYALAWKPDSTQLLTCSGDKTCRLWTVESRELVSE), 323–362 (GHNKPITVLGLSDDRSTIYTGSHDGVVTNWNSGSGTNDRI), 366–403 (GHGNQINGIAAWGDFVYTCGIDDSLRQFSVEGNSYTDY), 444–483 (PIKYEASSIAVNADTSDVAVGGDDQKLHIYTLKGGVLEPK), 487–526 (DHLGAVTDVSYSPDLKYLVACDAHRKVVLYSVEEYKPAHN), 531–570 (FHSARVNTVAWSPNSLLVASGSLDTTIIIWSVANPAKHTI), and 575–607 (HPQSQITRLVWLDNNTVISTGQDCNTKVWHVEN).

The protein belongs to the WD repeat AIP1 family. As to expression, expressed in pupal wing cells.

It localises to the cytoplasm. It is found in the cytoskeleton. Its function is as follows. Induces disassembly of actin filaments in conjunction with ADF/cofilin family proteins. Together with GMF, promotes Arp2/3-nucleated actin filament array disassembly. Essential for organismal and cell viability. Required for the development of normal wing cell planar polarity. In egg chambers and together with GMF, plays an important role in directional migration of border cell clusters. The protein is Actin-interacting protein 1 (flr) of Drosophila melanogaster (Fruit fly).